Consider the following 351-residue polypeptide: L-threonine 3-dehydrogenase (351 aa).

Position 39 (C39) interacts with Zn(2+). Residues T41 and H44 each act as charge relay system in the active site. 6 residues coordinate Zn(2+): H64, E65, C94, C97, C100, and C108. NAD(+) contacts are provided by residues I176, D196, R201, 271 to 273, and 295 to 296; these read LGI and IY.

The protein belongs to the zinc-containing alcohol dehydrogenase family. Homotetramer. Zn(2+) is required as a cofactor.

It localises to the cytoplasm. The enzyme catalyses L-threonine + NAD(+) = (2S)-2-amino-3-oxobutanoate + NADH + H(+). The protein operates within amino-acid degradation; L-threonine degradation via oxydo-reductase pathway; glycine from L-threonine: step 1/2. In terms of biological role, catalyzes the NAD(+)-dependent oxidation of L-threonine to 2-amino-3-ketobutyrate. The chain is L-threonine 3-dehydrogenase from Francisella tularensis subsp. holarctica (strain OSU18).